Consider the following 765-residue polypeptide: E3 ubiquitin-protein ligase SlrP (765 aa).

The tract at residues 1–451 is interaction with target proteins; that stretch reads MFNITNIQST…VDYQGPRVLF (451 aa). LRR repeat units lie at residues 200–219, 221–242, 243–262, 263–284, 285–305, 306–325, 326–346, 347–368, 369–389, and 390–410; these read QITT…ENLQ, NIKT…LPDT, IQEM…RLPS, ALQS…LPEE, LRYL…LPSG, ITHL…TLPP, GLKT…SLPP, ELQV…LPPT, ITTL…LPAA, and LQIM…LPHF. The linker stretch occupies residues 452–461; it reads AMGDFSIVRV. The tract at residues 462-765 is E3 ubiquitin-protein ligase catalytic domain; that stretch reads TRPLHQAVQG…VSSLMSAYWR (304 aa). Residues 464 to 758 form the NEL domain; sequence PLHQAVQGWL…NILLKKEVSS (295 aa). The active-site Glycyl thioester intermediate is the cysteine 546.

The protein belongs to the LRR-containing bacterial E3 ligase family. As to quaternary structure, interacts with host TXN. In terms of processing, ubiquitinated in the presence of host E1 ubiquitin-activating enzyme, E2 ubiquitin-conjugating enzyme and ubiquitin.

Its subcellular location is the secreted. It is found in the host cytoplasm. It carries out the reaction S-ubiquitinyl-[E2 ubiquitin-conjugating enzyme]-L-cysteine + [acceptor protein]-L-lysine = [E2 ubiquitin-conjugating enzyme]-L-cysteine + N(6)-ubiquitinyl-[acceptor protein]-L-lysine.. With respect to regulation, binding to TXN is inhibited by hydrogen peroxide in vitro. Functionally, effector proteins function to alter host cell physiology and promote bacterial survival in host tissues. This protein is an E3 ubiquitin ligase that interferes with host's ubiquitination pathway. Can ubiquitinate both ubiquitin and host TXN (thioredoxin). Leads to significant decrease of thioredoxin activity and increase of host cell death. In Salmonella typhimurium (strain LT2 / SGSC1412 / ATCC 700720), this protein is E3 ubiquitin-protein ligase SlrP (slrP).